The chain runs to 278 residues: MQLRDLLTQATARLTRAGVPSPEVDARLLLEHVLGLNRTAFLLRGGEEIGPDAEARAWDSIERRAARVPLQHLTGEVEWGGVRLTSDARALVPRPETEWLLHLALEELRRVEKPRVLDVGTGTGALALGLKAAIPQAEVTATDLSPEALSLARENAALSGLDVKFVEGSLLAGLSGPFNLIVSNPPYLPTADRATADPEVRHDPDLALYAGEDGLDVARPLVAEAAAALVPGGALLLELDPRNAPTLAAELRTAGWQAEVRPDLTGRERFVRARRAGG.

Residues 120–124 (GTGTG), Asp-143, and Asn-184 each bind S-adenosyl-L-methionine. Residue 184–187 (NPPY) coordinates substrate.

This sequence belongs to the protein N5-glutamine methyltransferase family. PrmC subfamily.

It carries out the reaction L-glutaminyl-[peptide chain release factor] + S-adenosyl-L-methionine = N(5)-methyl-L-glutaminyl-[peptide chain release factor] + S-adenosyl-L-homocysteine + H(+). Its function is as follows. Methylates the class 1 translation termination release factors RF1/PrfA and RF2/PrfB on the glutamine residue of the universally conserved GGQ motif. The polypeptide is Release factor glutamine methyltransferase (Deinococcus radiodurans (strain ATCC 13939 / DSM 20539 / JCM 16871 / CCUG 27074 / LMG 4051 / NBRC 15346 / NCIMB 9279 / VKM B-1422 / R1)).